The sequence spans 375 residues: DNA replication and repair protein RecF (375 aa).

An ATP-binding site is contributed by 30-37; sequence GKNAQGKT.

The protein belongs to the RecF family.

Its subcellular location is the cytoplasm. The RecF protein is involved in DNA metabolism; it is required for DNA replication and normal SOS inducibility. RecF binds preferentially to single-stranded, linear DNA. It also seems to bind ATP. The polypeptide is DNA replication and repair protein RecF (Lactobacillus acidophilus (strain ATCC 700396 / NCK56 / N2 / NCFM)).